We begin with the raw amino-acid sequence, 205 residues long: Urease accessory protein UreG (205 aa).

11-18 serves as a coordination point for GTP; that stretch reads GPVGSGKT.

It belongs to the SIMIBI class G3E GTPase family. UreG subfamily. Homodimer. UreD, UreF and UreG form a complex that acts as a GTP-hydrolysis-dependent molecular chaperone, activating the urease apoprotein by helping to assemble the nickel containing metallocenter of UreC. The UreE protein probably delivers the nickel.

It is found in the cytoplasm. Functionally, facilitates the functional incorporation of the urease nickel metallocenter. This process requires GTP hydrolysis, probably effectuated by UreG. The sequence is that of Urease accessory protein UreG from Prochlorococcus marinus (strain NATL1A).